A 400-amino-acid chain; its full sequence is Argininosuccinate synthase (400 aa).

Residue 9–17 participates in ATP binding; sequence AYSGGLDTS. Tyrosine 87 is an L-citrulline binding site. Glycine 117 is a binding site for ATP. Residues threonine 119, asparagine 123, and aspartate 124 each contribute to the L-aspartate site. Position 123 (asparagine 123) interacts with L-citrulline. L-citrulline-binding residues include arginine 127, serine 176, serine 185, glutamate 261, and tyrosine 273.

It belongs to the argininosuccinate synthase family. Type 1 subfamily. As to quaternary structure, homotetramer.

The protein resides in the cytoplasm. It carries out the reaction L-citrulline + L-aspartate + ATP = 2-(N(omega)-L-arginino)succinate + AMP + diphosphate + H(+). Its pathway is amino-acid biosynthesis; L-arginine biosynthesis; L-arginine from L-ornithine and carbamoyl phosphate: step 2/3. The sequence is that of Argininosuccinate synthase from Chlorobium luteolum (strain DSM 273 / BCRC 81028 / 2530) (Pelodictyon luteolum).